We begin with the raw amino-acid sequence, 505 residues long: Succinyl-CoA:acetate CoA-transferase (505 aa).

Gly269 to Val273 provides a ligand contact to CoA. The active-site 5-glutamyl coenzyme A thioester intermediate is Glu294. CoA-binding residues include Ile364, Asn384, Gly388, and Lys408.

The protein belongs to the acetyl-CoA hydrolase/transferase family. As to quaternary structure, homodimer.

The catalysed reaction is succinyl-CoA + acetate = succinate + acetyl-CoA. The protein operates within metabolic intermediate biosynthesis; acetyl-CoA biosynthesis. With respect to regulation, subject to competitive inhibition by coenzyme A (CoA). Its function is as follows. Utilizes succinyl-CoA to convert toxic acetate to acetyl-CoA and succinate. Required for growth on acetic acid and for resistance to high levels of acetic acid. Also has low activity with acetoacetate as substrate. This is Succinyl-CoA:acetate CoA-transferase from Acetobacter aceti.